The following is a 432-amino-acid chain: UDP-N-acetylglucosamine 1-carboxyvinyltransferase (432 aa).

Residue 22-23 coordinates phosphoenolpyruvate; it reads KN. Arginine 102 is a UDP-N-acetyl-alpha-D-glucosamine binding site. The active-site Proton donor is the cysteine 126. Cysteine 126 carries the 2-(S-cysteinyl)pyruvic acid O-phosphothioketal modification. UDP-N-acetyl-alpha-D-glucosamine is bound by residues 131–135, aspartate 317, and isoleucine 339; that span reads RPVDL.

It belongs to the EPSP synthase family. MurA subfamily.

It localises to the cytoplasm. The catalysed reaction is phosphoenolpyruvate + UDP-N-acetyl-alpha-D-glucosamine = UDP-N-acetyl-3-O-(1-carboxyvinyl)-alpha-D-glucosamine + phosphate. Its pathway is cell wall biogenesis; peptidoglycan biosynthesis. Functionally, cell wall formation. Adds enolpyruvyl to UDP-N-acetylglucosamine. In Rhodospirillum centenum (strain ATCC 51521 / SW), this protein is UDP-N-acetylglucosamine 1-carboxyvinyltransferase.